The following is a 27-amino-acid chain: Conotoxin flf14b (27 aa).

2 disulfide bridges follow: C6-C26 and C10-C22.

Expressed by the venom duct.

It localises to the secreted. The sequence is that of Conotoxin flf14b from Conus anabathrum floridanus (Florida cone).